Reading from the N-terminus, the 210-residue chain is N-(5'-phosphoribosyl)anthranilate isomerase (210 aa).

Belongs to the TrpF family.

It carries out the reaction N-(5-phospho-beta-D-ribosyl)anthranilate = 1-(2-carboxyphenylamino)-1-deoxy-D-ribulose 5-phosphate. The protein operates within amino-acid biosynthesis; L-tryptophan biosynthesis; L-tryptophan from chorismate: step 3/5. The protein is N-(5'-phosphoribosyl)anthranilate isomerase of Trichormus variabilis (strain ATCC 29413 / PCC 7937) (Anabaena variabilis).